We begin with the raw amino-acid sequence, 755 residues long: E3 ubiquitin-protein ligase TRIM56 (755 aa).

An RING-type zinc finger spans residues 21-60; sequence CKICLEQLRAPKTLPCLHTYCQDCLAQLADGGRVRCPECR. 2 B box-type zinc fingers span residues 98–149 and 164–205; these read KPAC…VVDL and RQAA…CLPL. Zn(2+) contacts are provided by cysteine 169, histidine 172, cysteine 192, and histidine 197. Residues 216 to 314 are a coiled coil; it reads LEGLLAGVDN…AAAFARRVLS (99 aa). Positions 371 to 484 are disordered; sequence EEQQPQKDGG…SPALGPNLDG (114 aa). Over residues 392-404 the composition is skewed to basic and acidic residues; it reads SQSRREDEPKTER. A phosphothreonine mark is found at threonine 418 and threonine 442. Basic and acidic residues predominate over residues 419 to 447; that stretch reads PKEEKAQTTREEGAQTLEEDRAQTPHEDG. Positions 453 to 469 are enriched in basic residues; that stretch reads RGGRPNKKKKFKGRLKS. Serine 475 is modified (phosphoserine).

Belongs to the TRIM/RBCC family. As to quaternary structure, homooligomer. Interacts with STING1. Interacts with TICAM1. Post-translationally, (Microbial infection) Preferentially ubiquitinated with 'Lys-48' and 'Lys-11'-linked ubiquitin chains by Salmonella effector SopA leading to proteasomal targeting and degradation. Autoubiquitinated. Widely expressed (at protein level).

The protein resides in the cytoplasm. The enzyme catalyses S-ubiquitinyl-[E2 ubiquitin-conjugating enzyme]-L-cysteine + [acceptor protein]-L-lysine = [E2 ubiquitin-conjugating enzyme]-L-cysteine + N(6)-ubiquitinyl-[acceptor protein]-L-lysine.. It participates in protein modification; protein ubiquitination. Functionally, E3 ubiquitin-protein ligase that plays a key role in innate antiviral immunity by mediating ubiquitination of CGAS and STING1. In response to pathogen- and host-derived double-stranded DNA (dsDNA), targets STING1 to 'Lys-63'-linked ubiquitination, thereby promoting its homodimerization, a step required for the production of type I interferon IFN-beta. Also mediate monoubiquitination of CGAS, thereby promoting CGAS oligomerization and subsequent activation. Promotes also TNFalpha-induced NF-kappa-B signaling by mediating 'Lys-63'-linked ubiquitination TAK1, leading to enhanced interaction between TAK1 and CHUK/IKKalpha. Independently of its E3 ubiquitin ligase activity, positive regulator of TLR3 signaling. Potentiates extracellular double stranded RNA (dsRNA)-induced expression of IFNB1 and interferon-stimulated genes ISG15, IFIT1/ISG56, CXCL10, OASL and CCL5/RANTES. Promotes establishment of an antiviral state by TLR3 ligand and TLR3-mediated chemokine induction following infection by hepatitis C virus. Acts as a restriction factor of Zika virus through direct interaction with the viral RNA via its C-terminal region. This chain is E3 ubiquitin-protein ligase TRIM56, found in Homo sapiens (Human).